A 192-amino-acid polypeptide reads, in one-letter code: MLLANTAAAVLLLIVCIGASVGLPTVDEENVVQAEQLPILPTADSSKPTDDTVKAIAPQPRYLLPADFAVKNKKFTIGTLGVGSFFRAWRNCIDEGKGLATIESEKEQKYLESLLKASSTGSNYWIGATNIGASNTNKLTWITTDLPVQTKPPFLNVVAKSTCIALTPTGSWTLRNCLNPLNIFPYICEEYF.

An N-terminal signal peptide occupies residues 1–22 (MLLANTAAAVLLLIVCIGASVG). Positions 71-186 (KNKKFTIGTL…CLNPLNIFPY (116 aa)) constitute a C-type lectin domain. Cysteine 163 and cysteine 177 are oxidised to a cystine.

In terms of tissue distribution, expressed in the gut of adults.

This is Protein A16 (CTL3) from Anopheles gambiae (African malaria mosquito).